We begin with the raw amino-acid sequence, 446 residues long: Argininosuccinate synthase (446 aa).

ATP contacts are provided by residues 17 to 25 (AFSGGLDTS) and A43. Y99 contributes to the L-citrulline binding site. Residues G129 and T131 each contribute to the ATP site. Positions 131, 135, and 136 each coordinate L-aspartate. N135 contacts L-citrulline. Residue D136 participates in ATP binding. R139 and S192 together coordinate L-citrulline. D194 contacts ATP. The L-citrulline site is built by T201, E203, and E280.

The protein belongs to the argininosuccinate synthase family. Type 2 subfamily. Homotetramer.

The protein localises to the cytoplasm. It catalyses the reaction L-citrulline + L-aspartate + ATP = 2-(N(omega)-L-arginino)succinate + AMP + diphosphate + H(+). It participates in amino-acid biosynthesis; L-arginine biosynthesis; L-arginine from L-ornithine and carbamoyl phosphate: step 2/3. This chain is Argininosuccinate synthase, found in Variovorax paradoxus (strain S110).